The following is a 112-amino-acid chain: Iron-sulfur cluster assembly protein CyaY (112 aa).

Belongs to the frataxin family.

Involved in iron-sulfur (Fe-S) cluster assembly. May act as a regulator of Fe-S biogenesis. The chain is Iron-sulfur cluster assembly protein CyaY from Janthinobacterium sp. (strain Marseille) (Minibacterium massiliensis).